The primary structure comprises 243 residues: 23S rRNA (guanosine-2'-O-)-methyltransferase RlmB (243 aa).

3 residues coordinate S-adenosyl-L-methionine: G196, I216, and L225.

It belongs to the class IV-like SAM-binding methyltransferase superfamily. RNA methyltransferase TrmH family. RlmB subfamily. Homodimer.

It is found in the cytoplasm. The catalysed reaction is guanosine(2251) in 23S rRNA + S-adenosyl-L-methionine = 2'-O-methylguanosine(2251) in 23S rRNA + S-adenosyl-L-homocysteine + H(+). Functionally, specifically methylates the ribose of guanosine 2251 in 23S rRNA. This is 23S rRNA (guanosine-2'-O-)-methyltransferase RlmB from Shigella flexneri.